The following is a 102-amino-acid chain: MSALSTQERLLQVILAPQITEKATRVADKYQQIAFRVRTDATKPEIKAAVELVFKVEVDSVTVVNVGGKVKRAGRTFGRRKDWKKAYVSLKPGQEINFAAGE.

The protein belongs to the universal ribosomal protein uL23 family. As to quaternary structure, part of the 50S ribosomal subunit. Contacts protein L29, and trigger factor when it is bound to the ribosome.

Functionally, one of the early assembly proteins it binds 23S rRNA. One of the proteins that surrounds the polypeptide exit tunnel on the outside of the ribosome. Forms the main docking site for trigger factor binding to the ribosome. The chain is Large ribosomal subunit protein uL23 from Methylobacillus flagellatus (strain ATCC 51484 / DSM 6875 / VKM B-1610 / KT).